The following is a 264-amino-acid chain: 3-methyl-2-oxobutanoate hydroxymethyltransferase (264 aa).

Mg(2+) is bound by residues Asp41 and Asp80. 3-methyl-2-oxobutanoate is bound by residues 41–42 (DS), Asp80, and Lys109. Residue Glu111 participates in Mg(2+) binding. Residue Glu178 is the Proton acceptor of the active site.

The protein belongs to the PanB family. Homodecamer; pentamer of dimers. Mg(2+) serves as cofactor.

The protein localises to the cytoplasm. The catalysed reaction is 3-methyl-2-oxobutanoate + (6R)-5,10-methylene-5,6,7,8-tetrahydrofolate + H2O = 2-dehydropantoate + (6S)-5,6,7,8-tetrahydrofolate. Its pathway is cofactor biosynthesis; (R)-pantothenate biosynthesis; (R)-pantoate from 3-methyl-2-oxobutanoate: step 1/2. In terms of biological role, catalyzes the reversible reaction in which hydroxymethyl group from 5,10-methylenetetrahydrofolate is transferred onto alpha-ketoisovalerate to form ketopantoate. This is 3-methyl-2-oxobutanoate hydroxymethyltransferase from Thermosipho melanesiensis (strain DSM 12029 / CIP 104789 / BI429).